A 141-amino-acid polypeptide reads, in one-letter code: Large ribosomal subunit protein uL11 (141 aa).

Belongs to the universal ribosomal protein uL11 family. As to quaternary structure, part of the ribosomal stalk of the 50S ribosomal subunit. Interacts with L10 and the large rRNA to form the base of the stalk. L10 forms an elongated spine to which L12 dimers bind in a sequential fashion forming a multimeric L10(L12)X complex. One or more lysine residues are methylated.

Functionally, forms part of the ribosomal stalk which helps the ribosome interact with GTP-bound translation factors. The protein is Large ribosomal subunit protein uL11 of Synechococcus sp. (strain JA-3-3Ab) (Cyanobacteria bacterium Yellowstone A-Prime).